The chain runs to 821 residues: MLHMNSASSADSMEIMESHFDPTQQNDSTIIESRYSPEEYLEQSFEIQRIISGENSEPQTVASQEISDSQEEDTTLTSSQFEDCGTEYNEVVEDDEFRSEDEDDFMDEEEEYALYEAELSSSPSIHEEVIDCNFVHAIRGFEATVEGQVDATKGDMMILLDDSNSYWWLVKMCKNLAIGYLPAEYIETPSERLARLNKYKNSETSNSQQSVTLPPLDIVEKTLEAPSPNFRIKRVTFTCSSNSSDDEMDSENDYEAMVNRTVAENGLEIEFSDSSDSSLSAEYRSESEDHVTDSPAYVDLTELEGGFNQFNSTSFQSTSPLGLEIVETEINGSSTTADSKNSHSPYSKFSSAYPDAENSNISKINISIAGNKELYGNATQSDPSLYSTWIANKHKTASSATVDSPLRRSLSVDAMQSNASFSSYSSTSNTDKSLRPSSYSAVSESSNFTHDVSRDNKEISLNAPKSIIVSQSDSFDTSNVTQDAPNDVEKEPISGQMPNNLSVQSLKQLEVYPIRHSVSIEMPSEKLLSPRLYSSSTPSSPTKGFQKDDEEDSENRKQADKVELSPSSLLRQMSLPVDSSSQSDAQCTTSSVYITAERKAFSQSSIDLSTLSNHHVNNEINRRSFAGGFTSLADELSEMRELLHESPAPLECNEEMVIPTPELDASSAIPSSSISHDEDLLPRKNTEESTSSSSFSSLITSPASLQYDENPFKQSVVAELNNNSSSVPFVDSAHASDIHAYDNDHVSTKNKEFNRRLREFILDPDSLSGLYWSVKSAGVRASRRVSRNIEGESVSSDLDDIFANVLKGLSDEMASLLNTNR.

Polar residues-rich tracts occupy residues 1-11 (MLHMNSASSAD) and 21-31 (DPTQQNDSTII). The interval 1-36 (MLHMNSASSADSMEIMESHFDPTQQNDSTIIESRYS) is disordered. Residue Y35 is modified to Phosphotyrosine. The residue at position 36 (S36) is a Phosphoserine. At Y40 the chain carries Phosphotyrosine. Residues 51–79 (ISGENSEPQTVASQEISDSQEEDTTLTSS) form a disordered region. The span at 53 to 67 (GENSEPQTVASQEIS) shows a compositional bias: polar residues. One can recognise an SH3 domain in the interval 130–191 (IDCNFVHAIR…PAEYIETPSE (62 aa)). 5 disordered regions span residues 267 to 292 (LEIE…DHVT), 333 to 352 (SSTT…FSSA), 473 to 500 (DSFD…MPNN), 529 to 570 (SPRL…SSLL), and 664 to 697 (DASS…SFSS). The span at 268–282 (EIEFSDSSDSSLSAE) shows a compositional bias: low complexity. Positions 283–292 (YRSESEDHVT) are enriched in basic and acidic residues. Polar residues-rich tracts occupy residues 333–350 (SSTT…SKFS) and 473–484 (DSFDTSNVTQDA). The tract at residues 527–821 (LLSPRLYSSS…EMASLLNTNR (295 aa)) is interaction with tea1. Over residues 529-541 (SPRLYSSSTPSSP) the composition is skewed to low complexity. Residues 554–563 (ENRKQADKVE) show a composition bias toward basic and acidic residues. The interval 599 to 821 (KAFSQSSIDL…EMASLLNTNR (223 aa)) is interaction with win1. The segment covering 665 to 674 (ASSAIPSSSI) has biased composition (low complexity). The segment covering 675 to 687 (SHDEDLLPRKNTE) has biased composition (basic and acidic residues).

As to quaternary structure, an essential component of the tea1 cell-end complex. Interacts with win1, tea1 and for3. Interacts with tip1 in the presence of tea1.

It is found in the cytoplasm. Its subcellular location is the cytoskeleton. Functionally, cell polarity factor essential for the bipolar localization and function of structures containing the cell-end marker tea1 during the normal cell cycle. Regulates cell polarity in complex with tea1 and together with the stress signaling MAPK cascade, contributes to cell polarity maintenance under stress conditions. Required for the localization of for3 at the cell tip specifically during initiation of bipolar growth. During the new end take off (NETO), formation of a protein complex that includes tea1, tea4 and for3 is necessary and sufficient for the establishment of cell polarity and localized actin assembly at new cell ends. The protein is Tip elongation aberrant protein Tea4 of Schizosaccharomyces pombe (strain 972 / ATCC 24843) (Fission yeast).